Consider the following 546-residue polypeptide: Chaperonin GroEL (546 aa).

ATP-binding positions include 29–32, Lys-50, 86–90, Gly-414, 477–479, and Asp-493; these read TLGP, DGTTT, and NAL.

It belongs to the chaperonin (HSP60) family. In terms of assembly, forms a cylinder of 14 subunits composed of two heptameric rings stacked back-to-back. Interacts with the co-chaperonin GroES.

Its subcellular location is the cytoplasm. It carries out the reaction ATP + H2O + a folded polypeptide = ADP + phosphate + an unfolded polypeptide.. Together with its co-chaperonin GroES, plays an essential role in assisting protein folding. The GroEL-GroES system forms a nano-cage that allows encapsulation of the non-native substrate proteins and provides a physical environment optimized to promote and accelerate protein folding. The protein is Chaperonin GroEL of Leptospira interrogans serogroup Icterohaemorrhagiae serovar Lai (strain 56601).